Reading from the N-terminus, the 203-residue chain is Small ribosomal subunit protein uS7 (203 aa).

Positions 1–21 (MSSEAPEPDAPASTDDERVSA) are disordered.

This sequence belongs to the universal ribosomal protein uS7 family. In terms of assembly, part of the 30S ribosomal subunit.

Its function is as follows. One of the primary rRNA binding proteins, it binds directly to 16S rRNA where it nucleates assembly of the head domain of the 30S subunit. Is located at the subunit interface close to the decoding center. In Natronomonas pharaonis (strain ATCC 35678 / DSM 2160 / CIP 103997 / JCM 8858 / NBRC 14720 / NCIMB 2260 / Gabara) (Halobacterium pharaonis), this protein is Small ribosomal subunit protein uS7.